The sequence spans 142 residues: Protein SprT-like (142 aa).

The region spanning 4 to 138 (YVKKVSIEDF…FACGYCHGRL (135 aa)) is the SprT-like domain. Zn(2+) is bound at residue His-62. Glu-63 is an active-site residue. His-66 contributes to the Zn(2+) binding site.

This sequence belongs to the SprT family. Requires Zn(2+) as cofactor.

It localises to the cytoplasm. The protein is Protein SprT-like of Streptococcus agalactiae serotype Ia (strain ATCC 27591 / A909 / CDC SS700).